A 274-amino-acid polypeptide reads, in one-letter code: Tryptase beta-2 (274 aa).

Positions 1-19 are cleaved as a signal peptide; the sequence is MLKLLLLLALSPLASLVHA. A propeptide spans 20–29 (activation peptide); the sequence is APCPVKQRVG. One can recognise a Peptidase S1 domain in the interval 30 to 271; that stretch reads IVGGREASES…YLDWIHRYVP (242 aa). Cysteines 58 and 74 form a disulfide. Catalysis depends on H73, which acts as the Charge relay system. Residue Y96 is modified to Phosphotyrosine. N-linked (GlcNAc...) asparagine glycosylation is present at N104. D120 functions as the Charge relay system in the catalytic mechanism. N131 carries an N-linked (GlcNAc...) asparagine glycan. 3 disulfide bridges follow: C154–C229, C187–C210, and C219–C247. The active-site Charge relay system is the S223.

This sequence belongs to the peptidase S1 family. Tryptase subfamily. As to quaternary structure, homotetramer. The active tetramer is converted to inactive monomers at neutral and acidic pH in the absence of heparin. Low concentrations of inactive monomers become active monomers at pH 6.0 in the presence of heparin. When the concentration of active monomers is higher, they convert to active monomers and then to active tetramers. These monomers are active and functionally distinct from the tetrameric enzyme. In contrast to the hidden active sites in the tetrameric form, the active site of the monomeric form is accessible for macromolecular proteins and inhibitors, e.g. fibrinogen which is a substrate for the monomeric but not for the tetrameric form. The monomeric form forms a complex with SERPINB6.

Its subcellular location is the secreted. The enzyme catalyses Preferential cleavage: Arg-|-Xaa, Lys-|-Xaa, but with more restricted specificity than trypsin.. In terms of biological role, tryptase is the major neutral protease present in mast cells and is secreted upon the coupled activation-degranulation response of this cell type. Plays a role in innate immunity. This is Tryptase beta-2 (Tpsb2) from Rattus norvegicus (Rat).